We begin with the raw amino-acid sequence, 207 residues long: Venom allergen 5 (207 aa).

Cystine bridges form between C4–C16, C8–C105, C29–C97, and C173–C190. Residues 48 to 192 (VDEHNRFRQK…MKSHYLVCNY (145 aa)) enclose the SCP domain.

The protein belongs to the CRISP family. Venom allergen 5-like subfamily. Monomer. As to expression, expressed by the venom gland.

It localises to the secreted. This is Venom allergen 5 from Polybia scutellaris rioplatensis (Camoati).